The following is a 109-amino-acid chain: Thiosulfate sulfurtransferase GlpE (109 aa).

Positions 16 to 104 (REQGAVVVDI…WRSTYPAETA (89 aa)) constitute a Rhodanese domain. C64 (cysteine persulfide intermediate) is an active-site residue.

Belongs to the GlpE family.

The protein localises to the cytoplasm. The enzyme catalyses thiosulfate + hydrogen cyanide = thiocyanate + sulfite + 2 H(+). It catalyses the reaction thiosulfate + [thioredoxin]-dithiol = [thioredoxin]-disulfide + hydrogen sulfide + sulfite + 2 H(+). Functionally, transferase that catalyzes the transfer of sulfur from thiosulfate to thiophilic acceptors such as cyanide or dithiols. May function in a CysM-independent thiosulfate assimilation pathway by catalyzing the conversion of thiosulfate to sulfite, which can then be used for L-cysteine biosynthesis. The sequence is that of Thiosulfate sulfurtransferase GlpE from Pseudomonas fluorescens (strain ATCC BAA-477 / NRRL B-23932 / Pf-5).